Reading from the N-terminus, the 307-residue chain is UPF0276 protein HI_1600 (307 aa).

It belongs to the UPF0276 family.

The sequence is that of UPF0276 protein HI_1600 from Haemophilus influenzae (strain ATCC 51907 / DSM 11121 / KW20 / Rd).